Here is a 329-residue protein sequence, read N- to C-terminus: 4-methyl-2-oxopentanoate reductase A (329 aa).

NAD(+) contacts are provided by residues 162 to 163 (GI), 240 to 242 (TAR), and D266. R242 is an active-site residue. Residue E271 is part of the active site. H289 (proton donor) is an active-site residue.

This sequence belongs to the D-isomer specific 2-hydroxyacid dehydrogenase family.

It catalyses the reaction (2R)-hydroxy-4-methylpentanoate + NADP(+) = 4-methyl-2-oxopentanoate + NADPH + H(+). The enzyme catalyses a (2R)-2-hydroxycarboxylate + NADP(+) = a 2-oxocarboxylate + NADPH + H(+). In terms of biological role, 4-methyl-2-oxopentanoate (MOA) reductase that reduces MOA, a possible intermediate in leucine synthesis, to D-leucate in a NADPH- or NADH-dependent manner, but with a preference for NADPH. In addition to MOA, shows broad substrate specificity toward 2-keto acids. This chain is 4-methyl-2-oxopentanoate reductase A, found in Aspergillus oryzae (strain ATCC 42149 / RIB 40) (Yellow koji mold).